We begin with the raw amino-acid sequence, 99 residues long: MSTIVRQVTVQGRVQGVGYRAFVEYQAMKLDLEGWVRNRRDGSVEALFAGPAEAVAEIIARCRRGPSSARVTKLDEQPGSVDALDLRRPGERFSTLPTL.

The Acylphosphatase-like domain occupies 5-97 (VRQVTVQGRV…RPGERFSTLP (93 aa)). Residues R20 and N38 contribute to the active site.

It belongs to the acylphosphatase family.

It carries out the reaction an acyl phosphate + H2O = a carboxylate + phosphate + H(+). The chain is Acylphosphatase (acyP) from Rhodopseudomonas palustris (strain BisB18).